We begin with the raw amino-acid sequence, 162 residues long: Sec-independent protein translocase protein TatB (162 aa).

Residues 1–21 (MFDIGFSELILIFVVGLVVLG) form a helical membrane-spanning segment. The tract at residues 136–162 (LTAYYPPDDDLVSPSTTKLEQDKQNVN) is disordered.

It belongs to the TatB family. As to quaternary structure, the Tat system comprises two distinct complexes: a TatABC complex, containing multiple copies of TatA, TatB and TatC subunits, and a separate TatA complex, containing only TatA subunits. Substrates initially bind to the TatABC complex, which probably triggers association of the separate TatA complex to form the active translocon.

It localises to the cell inner membrane. Functionally, part of the twin-arginine translocation (Tat) system that transports large folded proteins containing a characteristic twin-arginine motif in their signal peptide across membranes. Together with TatC, TatB is part of a receptor directly interacting with Tat signal peptides. TatB may form an oligomeric binding site that transiently accommodates folded Tat precursor proteins before their translocation. The chain is Sec-independent protein translocase protein TatB from Haemophilus ducreyi (strain 35000HP / ATCC 700724).